The primary structure comprises 361 residues: Phosphoserine aminotransferase (361 aa).

R43 contacts L-glutamate. Pyridoxal 5'-phosphate contacts are provided by residues 77 to 78, W103, T153, D173, and Q196; that span reads AS. N6-(pyridoxal phosphate)lysine is present on K197. A pyridoxal 5'-phosphate-binding site is contributed by 238 to 239; the sequence is NT.

Belongs to the class-V pyridoxal-phosphate-dependent aminotransferase family. SerC subfamily. In terms of assembly, homodimer. Pyridoxal 5'-phosphate serves as cofactor.

Its subcellular location is the cytoplasm. It carries out the reaction O-phospho-L-serine + 2-oxoglutarate = 3-phosphooxypyruvate + L-glutamate. It catalyses the reaction 4-(phosphooxy)-L-threonine + 2-oxoglutarate = (R)-3-hydroxy-2-oxo-4-phosphooxybutanoate + L-glutamate. Its pathway is amino-acid biosynthesis; L-serine biosynthesis; L-serine from 3-phospho-D-glycerate: step 2/3. It participates in cofactor biosynthesis; pyridoxine 5'-phosphate biosynthesis; pyridoxine 5'-phosphate from D-erythrose 4-phosphate: step 3/5. Catalyzes the reversible conversion of 3-phosphohydroxypyruvate to phosphoserine and of 3-hydroxy-2-oxo-4-phosphonooxybutanoate to phosphohydroxythreonine. This is Phosphoserine aminotransferase from Pseudomonas aeruginosa (strain ATCC 15692 / DSM 22644 / CIP 104116 / JCM 14847 / LMG 12228 / 1C / PRS 101 / PAO1).